A 527-amino-acid chain; its full sequence is ATP synthase subunit alpha (527 aa).

ATP is bound at residue Gly172–Thr179.

Belongs to the ATPase alpha/beta chains family. In terms of assembly, F-type ATPases have 2 components, CF(1) - the catalytic core - and CF(0) - the membrane proton channel. CF(1) has five subunits: alpha(3), beta(3), gamma(1), delta(1), epsilon(1). CF(0) has three main subunits: a(1), b(2) and c(9-12). The alpha and beta chains form an alternating ring which encloses part of the gamma chain. CF(1) is attached to CF(0) by a central stalk formed by the gamma and epsilon chains, while a peripheral stalk is formed by the delta and b chains.

The protein resides in the cell inner membrane. The enzyme catalyses ATP + H2O + 4 H(+)(in) = ADP + phosphate + 5 H(+)(out). Its function is as follows. Produces ATP from ADP in the presence of a proton gradient across the membrane. The alpha chain is a regulatory subunit. This chain is ATP synthase subunit alpha, found in Bacteroides thetaiotaomicron (strain ATCC 29148 / DSM 2079 / JCM 5827 / CCUG 10774 / NCTC 10582 / VPI-5482 / E50).